We begin with the raw amino-acid sequence, 276 residues long: MSLRPFETPGGLSSLSPRRRDFSPTRPGTNGPSAKLEHVTERFAGLWTDLEQEKQNKRIQESTRFSLLQESLQRIEKSVEAEVKRRAESDKQLQSHFEGEIKTLQERQLQQFTDLQLALKSAVESLNQRITDLHALVRDERESRRSDIEHLATSLVGKVNECVAAIDEERNGRVQEQTVSMKRVGEDLMLLSQRLDTEKNTRDSEVSALRAEVHDAIGNRNLADDQFKGAVLDEVAGLKAALALEREERIAEDDEIVQAVNDYTKALQEGLKLVSA.

The nonhelical region stretch occupies residues 1–31 (MSLRPFETPGGLSSLSPRRRDFSPTRPGTNG). The disordered stretch occupies residues 1-37 (MSLRPFETPGGLSSLSPRRRDFSPTRPGTNGPSAKLE). The rod stretch occupies residues 32–276 (PSAKLEHVTE…LQEGLKLVSA (245 aa)). The stretch at 67–145 (LLQESLQRIE…LVRDERESRR (79 aa)) forms a coiled coil.

Belongs to the SF-assemblin family.

It is found in the cytoplasm. The protein localises to the cytoskeleton. Its function is as follows. Major component of the striated microtubule-associated fibers (SMAFs; system-I-fibers). This chain is SF-assemblin, found in Chlamydomonas reinhardtii (Chlamydomonas smithii).